The primary structure comprises 338 residues: Ketol-acid reductoisomerase (NADP(+)) (338 aa).

The KARI N-terminal Rossmann domain occupies 1–181 (MKVYYDKDAD…GGTKGGVIET (181 aa)). NADP(+)-binding positions include 24-27 (YGSQ), Arg-47, and Ser-52. Residue His-107 is part of the active site. Gly-133 serves as a coordination point for NADP(+). Residues 182–327 (NFREETETDL…GQLRDMMPWI (146 aa)) form the KARI C-terminal knotted domain. Residues Asp-190, Glu-194, Glu-226, and Glu-230 each coordinate Mg(2+). Ser-251 contacts substrate.

The protein belongs to the ketol-acid reductoisomerase family. It depends on Mg(2+) as a cofactor.

The catalysed reaction is (2R)-2,3-dihydroxy-3-methylbutanoate + NADP(+) = (2S)-2-acetolactate + NADPH + H(+). It carries out the reaction (2R,3R)-2,3-dihydroxy-3-methylpentanoate + NADP(+) = (S)-2-ethyl-2-hydroxy-3-oxobutanoate + NADPH + H(+). It functions in the pathway amino-acid biosynthesis; L-isoleucine biosynthesis; L-isoleucine from 2-oxobutanoate: step 2/4. The protein operates within amino-acid biosynthesis; L-valine biosynthesis; L-valine from pyruvate: step 2/4. In terms of biological role, involved in the biosynthesis of branched-chain amino acids (BCAA). Catalyzes an alkyl-migration followed by a ketol-acid reduction of (S)-2-acetolactate (S2AL) to yield (R)-2,3-dihydroxy-isovalerate. In the isomerase reaction, S2AL is rearranged via a Mg-dependent methyl migration to produce 3-hydroxy-3-methyl-2-ketobutyrate (HMKB). In the reductase reaction, this 2-ketoacid undergoes a metal-dependent reduction by NADPH to yield (R)-2,3-dihydroxy-isovalerate. The sequence is that of Ketol-acid reductoisomerase (NADP(+)) from Aromatoleum aromaticum (strain DSM 19018 / LMG 30748 / EbN1) (Azoarcus sp. (strain EbN1)).